We begin with the raw amino-acid sequence, 972 residues long: Isoleucine--tRNA ligase (972 aa).

The short motif at 63–73 is the 'HIGH' region element; that stretch reads PYANGNIHIGH. E603 contacts L-isoleucyl-5'-AMP. The 'KMSKS' region motif lies at 644–648; it reads KMSKS. K647 provides a ligand contact to ATP.

This sequence belongs to the class-I aminoacyl-tRNA synthetase family. IleS type 1 subfamily. As to quaternary structure, monomer.

Its subcellular location is the cytoplasm. It catalyses the reaction tRNA(Ile) + L-isoleucine + ATP = L-isoleucyl-tRNA(Ile) + AMP + diphosphate. In terms of biological role, catalyzes the attachment of isoleucine to tRNA(Ile). As IleRS can inadvertently accommodate and process structurally similar amino acids such as valine, to avoid such errors it has two additional distinct tRNA(Ile)-dependent editing activities. One activity is designated as 'pretransfer' editing and involves the hydrolysis of activated Val-AMP. The other activity is designated 'posttransfer' editing and involves deacylation of mischarged Val-tRNA(Ile). The chain is Isoleucine--tRNA ligase from Brucella suis biovar 1 (strain 1330).